Here is a 463-residue protein sequence, read N- to C-terminus: Cysteine--tRNA ligase (463 aa).

Cys-33 is a Zn(2+) binding site. Positions 35-45 (PTVYDFAHIGN) match the 'HIGH' region motif. 3 residues coordinate Zn(2+): Cys-221, His-246, and Glu-250. Positions 279–283 (KMSKS) match the 'KMSKS' region motif. An ATP-binding site is contributed by Lys-282.

Belongs to the class-I aminoacyl-tRNA synthetase family. As to quaternary structure, monomer. It depends on Zn(2+) as a cofactor.

Its subcellular location is the cytoplasm. It catalyses the reaction tRNA(Cys) + L-cysteine + ATP = L-cysteinyl-tRNA(Cys) + AMP + diphosphate. The chain is Cysteine--tRNA ligase from Rhizobium leguminosarum bv. trifolii (strain WSM2304).